Here is a 494-residue protein sequence, read N- to C-terminus: DBIRD complex subunit ZNF326 (494 aa).

3 disordered regions span residues 1–22 (MDRE…QSFS), 147–170 (AFGG…RGQM), and 202–264 (KMAP…NSEK). Residues 7–22 (SYNQRSVNSYGNQSFS) show a composition bias toward polar residues. The Bipartite nuclear localization signal signature appears at 200-221 (KRKMAPPFKPVGFFGKKQKLSK). C2H2 AKAP95-type zinc fingers lie at residues 273–295 (CSFC…SATH) and 365–388 (CSAC…SADH). The disordered stretch occupies residues 429–494 (PFETQPDEQQ…CDPLTTTDEV (66 aa)). Over residues 433-451 (QPDEQQQEQEEEEEEEEQQ) the composition is skewed to acidic residues.

This sequence belongs to the AKAP95 family. Component of the DBIRD complex.

The protein localises to the nucleus. In terms of biological role, core component of the DBIRD complex, a multiprotein complex that acts at the interface between core mRNP particles and RNA polymerase II (RNAPII) and integrates transcript elongation with the regulation of alternative splicing. This chain is DBIRD complex subunit ZNF326 (znf326), found in Xenopus laevis (African clawed frog).